We begin with the raw amino-acid sequence, 358 residues long: Alanine racemase (358 aa).

Lysine 34 functions as the Proton acceptor; specific for D-alanine in the catalytic mechanism. Residue lysine 34 is modified to N6-(pyridoxal phosphate)lysine. Arginine 129 is a binding site for substrate. Residue tyrosine 254 is the Proton acceptor; specific for L-alanine of the active site. Methionine 302 provides a ligand contact to substrate.

Belongs to the alanine racemase family. Pyridoxal 5'-phosphate is required as a cofactor.

It catalyses the reaction L-alanine = D-alanine. Its pathway is amino-acid biosynthesis; D-alanine biosynthesis; D-alanine from L-alanine: step 1/1. In terms of biological role, catalyzes the interconversion of L-alanine and D-alanine. May also act on other amino acids. The chain is Alanine racemase (alr) from Vibrio atlanticus (strain LGP32) (Vibrio splendidus (strain Mel32)).